The following is a 1291-amino-acid chain: 1-phosphatidylinositol 4,5-bisphosphate phosphodiesterase gamma-1 (1291 aa).

A2 is subject to N-acetylalanine. The PH 1 domain maps to 27–142 (RSLEVGTVMT…WIRGLTWLME (116 aa)). In terms of domain architecture, EF-hand spans 152–187 (QIERWLRKQFYSVDRNREDRISAKDLKNMLSQVNYR). Ca(2+)-binding residues include D165, N167, E169, R171, and D176. The PI-PLC X-box domain maps to 320–464 (DTMNNPLSHY…LKRKILIKHK (145 aa)). Active-site residues include H335 and H380. Residues 489–523 (SIKNGILYLEDPVNHEWYPHYFVLTSSKIYYSEET) form the PH 2; first part domain. Y506 bears the Phosphotyrosine mark. A disordered region spans residues 522–544 (ETSSDQGNEDEEEPKEASGSTEL). SH2 domains are found at residues 550 to 657 (WFHG…SEPV) and 668 to 756 (WYHA…RYPI). Position 771 is a phosphotyrosine; by SYK (Y771). 2 positions are modified to phosphotyrosine: Y775 and Y783. A Phosphotyrosine; by ITK, SYK and TXK modification is found at Y783. The region spanning 791 to 851 (TFKCAVKALF…PSNYVEEMVS (61 aa)) is the SH3 domain. Residues 895-931 (FVFSISMASVAHWSLDVAADSQEELQDWVKKIREVAQ) enclose the PH 2; second part domain. The region spanning 953–1070 (LSELVVYCRP…GYVLQPSVMR (118 aa)) is the PI-PLC Y-box domain. A Phosphotyrosine modification is found at Y977. Positions 1071 to 1194 (DEAFDPFDKS…TGYRAVPLKN (124 aa)) constitute a C2 domain. Phosphoserine is present on residues S1222, S1228, and S1249. The residue at position 1254 (Y1254) is a Phosphotyrosine. At S1264 the chain carries Phosphoserine. A disordered region spans residues 1271–1291 (HFDGRDRRTPRRTRVNGDNRL).

As to quaternary structure, interacts with AGAP2 via its SH3 domain. Interacts (via SH2 domain) with RET. Interacts with FLT1 (tyrosine-phosphorylated). Interacts (via SH2 domain) with FGFR1, FGFR2, FGFR3 and FGFR4 (phosphorylated). Interacts with LAT (phosphorylated) upon TCR activation. Interacts (via SH3 domain) with the Pro-rich domain of TNK1. Associates with BLNK, VAV1, GRB2 and NCK1 in a B-cell antigen receptor-dependent fashion. Interacts with CBLB in activated T-cells; which inhibits phosphorylation. Interacts with SHB. Interacts (via SH3 domain) with the Arg/Gly-rich-flanked Pro-rich domains of KHDRBS1/SAM68. This interaction is selectively regulated by arginine methylation of KHDRBS1/SAM68. Interacts with INPP5D/SHIP1, THEMIS and CLNK. Interacts with AXL, FLT4 and KIT. Interacts with RALGPS1. Interacts (via the SH2 domains) with VIL1 (phosphorylated at C-terminus tyrosine phosphorylation sites). Interacts (via SH2 domain) with PDGFRA and PDGFRB (tyrosine phosphorylated). Interacts with PIP5K1C. Interacts with NTRK1 and NTRK2 (phosphorylated upon ligand-binding). Interacts with SYK; activates PLCG1. Interacts with GRB2, LAT and THEMIS upon TCR activation in thymocytes. Interacts with TESPA1; the association is increased with prolonged stimulation of the TCR and may facilitate the assembly of the LAT signalosome. Interacts (via C-terminal proline-rich domain (PRD)) with PLCG1 (via SH3 domain); this interaction leads to guanine nucleotide exchange from PlCG1 to DNM1 and enhances DNM1-dependent endocytosis. Ca(2+) is required as a cofactor. Ubiquitinated by CBLB in activated T-cells. In terms of processing, tyrosine phosphorylated in response to signaling via activated FLT3, KIT and PDGFRA. Tyrosine phosphorylated by activated FGFR1, FGFR2, FGFR3 and FGFR4. Tyrosine phosphorylated by activated FLT1 and KDR. Tyrosine phosphorylated by activated PDGFRB. The receptor-mediated activation of PLCG1 involves its phosphorylation by tyrosine kinases, in response to ligation of a variety of growth factor receptors and immune system receptors. For instance, SYK phosphorylates and activates PLCG1 in response to ligation of the B-cell receptor. May be dephosphorylated by PTPRJ. Phosphorylated by ITK and TXK on Tyr-783 upon TCR activation in T-cells.

Its subcellular location is the cell projection. It is found in the lamellipodium. It localises to the ruffle. The catalysed reaction is a 1,2-diacyl-sn-glycero-3-phospho-(1D-myo-inositol-4,5-bisphosphate) + H2O = 1D-myo-inositol 1,4,5-trisphosphate + a 1,2-diacyl-sn-glycerol + H(+). The enzyme catalyses a 1,2-diacyl-sn-glycero-3-phospho-(1D-myo-inositol) + H2O = 1D-myo-inositol 1-phosphate + a 1,2-diacyl-sn-glycerol + H(+). With respect to regulation, activated by phosphorylation on tyrosine residues. Functionally, mediates the production of the second messenger molecules diacylglycerol (DAG) and inositol 1,4,5-trisphosphate (IP3). Plays an important role in the regulation of intracellular signaling cascades. Becomes activated in response to ligand-mediated activation of receptor-type tyrosine kinases, such as PDGFRA, PDGFRB, EGFR, FGFR1, FGFR2, FGFR3 and FGFR4. Plays a role in actin reorganization and cell migration. Guanine nucleotide exchange factor that binds the GTPase DNM1 and catalyzes the dissociation of GDP, allowing a GTP molecule to bind in its place, therefore enhancing DNM1-dependent endocytosis. This chain is 1-phosphatidylinositol 4,5-bisphosphate phosphodiesterase gamma-1, found in Bos taurus (Bovine).